The primary structure comprises 429 residues: Glutamyl-tRNA reductase (429 aa).

Residues threonine 50–arginine 53, serine 116, glutamate 121–glutamine 123, and glutamine 127 each bind substrate. Cysteine 51 acts as the Nucleophile in catalysis. Residue glycine 196–alanine 201 coordinates NADP(+).

It belongs to the glutamyl-tRNA reductase family. Homodimer.

It carries out the reaction (S)-4-amino-5-oxopentanoate + tRNA(Glu) + NADP(+) = L-glutamyl-tRNA(Glu) + NADPH + H(+). The protein operates within porphyrin-containing compound metabolism; protoporphyrin-IX biosynthesis; 5-aminolevulinate from L-glutamyl-tRNA(Glu): step 1/2. Catalyzes the NADPH-dependent reduction of glutamyl-tRNA(Glu) to glutamate 1-semialdehyde (GSA). The chain is Glutamyl-tRNA reductase from Thermodesulfovibrio yellowstonii (strain ATCC 51303 / DSM 11347 / YP87).